The primary structure comprises 354 residues: Guanine nucleotide-binding protein G(i) subunit alpha-3 (354 aa).

G2 carries N-myristoyl glycine lipidation. C3 is lipidated: S-palmitoyl cysteine. One can recognise a G-alpha domain in the interval K32–Y354. Residues K35–T48 form a G1 motif region. GTP-binding residues include G42, E43, S44, G45, K46, S47, T48, D150, S151, L175, R176, T177, R178, V179, K180, T181, V201, G203, N269, K270, D272, L273, C325, A326, and T327. S47 lines the Mg(2+) pocket. Positions D173 to T181 are G2 motif. T181 is a binding site for Mg(2+). The G3 motif stretch occupies residues F196–R205. Residues I265 to D272 form a G4 motif region. Residues T324–T329 are G5 motif.

This sequence belongs to the G-alpha family. G(i/o/t/z) subfamily. Heterotrimeric G proteins are composed of 3 units; alpha, beta and gamma. The alpha subunit contains the guanine nucleotide binding site. GTP binding causes dissociation of the heterotrimer, liberating the individual subunits so that they can interact with downstream effector proteins. Forms a complex with CCDC88A/GIV and EGFR which leads to enhanced EGFR signaling and triggering of cell migration; ligand stimulation is required for recruitment of GNAI3 to the complex. Interacts (inactive GDP-bound form) with CCDC88A/GIV (via GBA motif); the interaction leads to activation of GNAI3. Interacts (inactive GDP-bound form) with CCDC88C/DAPLE (via GBA motif); the interaction leads to activation of GNAI3. Interacts (inactive GDP-bound form) with NUCB1 (via GBA motif) and NUCB2 (via GBA motif); the interaction leads to activation of GNAI3. Interacts (inactive GDP-bound form) with PLCD4 (via GBA motif); the interaction leads to activation of GNAI3. Interacts with INSR; the interaction is probably mediated by CCDC88A/GIV. Interacts with GPSM1. Interacts (GDP-bound form) with GPSM2 (via GoLoco domains). Does not interact with RGS2. Interacts with RGS8 and RGS10; this strongly enhances the intrinsic GTPase activity. Interacts with RGS16; this strongly enhances the intrinsic GTPase activity. Interacts with RGS12. Interacts (via active GTP- or inactive GDP-bound form) with RGS14. Interacts (via active GTP-bound form) with TRPC5 (via ANK repeats) in a homotetrameric ion channel; the interaction is direct and activates the channel activity.

Its subcellular location is the cytoplasm. It is found in the cell membrane. It localises to the cytoskeleton. The protein resides in the microtubule organizing center. The protein localises to the centrosome. Functionally, heterotrimeric guanine nucleotide-binding proteins (G proteins) function as transducers downstream of G protein-coupled receptors (GPCRs) in numerous signaling cascades. The alpha chain contains the guanine nucleotide binding site and alternates between an active, GTP-bound state and an inactive, GDP-bound state. Signaling by an activated GPCR promotes GDP release and GTP binding. The alpha subunit has a low GTPase activity that converts bound GTP to GDP, thereby terminating the signal. Both GDP release and GTP hydrolysis are modulated by numerous regulatory proteins. Signaling is mediated via effector proteins, such as adenylate cyclase. Inhibits adenylate cyclase activity, leading to decreased intracellular cAMP levels. Stimulates the activity of receptor-regulated K(+) channels. The active GTP-bound form prevents the association of RGS14 with centrosomes and is required for the translocation of RGS14 from the cytoplasm to the plasma membrane. May play a role in cell division. The active GTP-bound form activates the calcium permeant TRPC5 ion channels. The polypeptide is Guanine nucleotide-binding protein G(i) subunit alpha-3 (Gnai3) (Mus musculus (Mouse)).